The following is a 640-amino-acid chain: Insulin-like growth factor 1 receptor (640 aa).

2 Fibronectin type-III domains span residues 5–101 and 107–200; these read VPRP…TMPA and IPGP…VQAK. Over 14–208 the chain is Extracellular; that stretch reads EVMQIANTTM…AKTTYENFIH (195 aa). N-linked (GlcNAc...) asparagine glycosylation is found at Asn-20, Asn-29, Asn-37, Asn-173, and Asn-186. A helical transmembrane segment spans residues 209 to 232; it reads LMIALPIAVLLIVGGLVIMLYVFH. At 233 to 640 the chain is on the cytoplasmic side; it reads RKRNSSRLGN…ALPLPQSSTC (408 aa). Positions 250–253 match the IRS1- and SHC1-binding motif; the sequence is NPEY. Tyr-253 bears the Phosphotyrosine mark. Residues 272–547 enclose the Protein kinase domain; that stretch reads ITMSRELGQG…SVKDEMEAGF (276 aa). ATP is bound by residues 278–286 and Lys-306; that span reads LGQGSFGMV. Asp-408 (proton acceptor) is an active-site residue. 3 positions are modified to phosphotyrosine; by autocatalysis: Tyr-434, Tyr-438, and Tyr-439. Residues Lys-441 and Lys-444 each participate in a glycyl lysine isopeptide (Lys-Gly) (interchain with G-Cter in ubiquitin) cross-link. Ser-551 is subject to Phosphoserine; by GSK3-beta. Ser-555 carries the post-translational modification Phosphoserine. The disordered stretch occupies residues 555 to 640; sequence SEENKPPEPE…ALPLPQSSTC (86 aa). Residues 563-572 show a composition bias toward acidic residues; the sequence is PEELDLEPEN. The segment covering 573–589 has biased composition (low complexity); it reads MESVPLDPSASSASLPL. Positions 590 to 599 are enriched in basic and acidic residues; the sequence is PDRHSGHKAE.

It belongs to the protein kinase superfamily. Tyr protein kinase family. Insulin receptor subfamily. Tetramer of 2 alpha and 2 beta chains linked by disulfide bonds. The alpha chains contribute to the formation of the ligand-binding domain, while the beta chain carries the kinase domain. Interacts with PIK3R1 and with the PTB/PID domains of IRS1 and SHC1 in vitro when autophosphorylated on tyrosine residues. Forms a hybrid receptor with INSR, the hybrid is a tetramer consisting of 1 alpha chain and 1 beta chain of INSR and 1 alpha chain and 1 beta chain of IGF1R. Interacts with ARRB1 and ARRB2. Interacts with GRB10. Interacts with RACK1. Interacts with SOCS1, SOCS2 and SOCS3. Interacts with 14-3-3 proteins. Interacts with NMD2. Interacts with MAP3K5. Interacts with STAT3. Interacts (nascent precursor form) with ZFAND2B. In terms of processing, autophosphorylated on tyrosine residues in response to ligand binding. Autophosphorylation occurs in trans, i.e. one subunit of the dimeric receptor phosphorylates tyrosine residues on the other subunit. Autophosphorylation occurs in a sequential manner; Tyr-438 is predominantly phosphorylated first, followed by phosphorylation of Tyr-434 and Tyr-439. While every single phosphorylation increases kinase activity, all three tyrosine residues in the kinase activation loop (Tyr-438, Tyr-434 and Tyr-439) have to be phosphorylated for optimal activity. Can be autophosphorylated at additional tyrosine residues (in vitro). Autophosphorylated is followed by phosphorylation of juxtamembrane tyrosines and C-terminal serines. May also be phosphorylated at Tyr-434 and Tyr-439 by mTORC2. Phosphorylation of Tyr-253 is required for IRS1- and SHC1-binding. Phosphorylation of Ser-551 by GSK-3beta restrains kinase activity and promotes cell surface expression, it requires a priming phosphorylation at Ser-555. Dephosphorylated by PTPN1. Post-translationally, polyubiquitinated at Lys-441 and Lys-444 through both 'Lys-48' and 'Lys-29' linkages, promoting receptor endocytosis and subsequent degradation by the proteasome. Ubiquitination is facilitated by pre-existing phosphorylation. Sumoylated with SUMO1. In terms of processing, controlled by regulated intramembrane proteolysis (RIP). Undergoes metalloprotease-dependent constitutive ectodomain shedding to produce a membrane-anchored 52 kDa C-Terminal fragment which is further processed by presenilin gamma-secretase to yield an intracellular 50 kDa fragment.

Its subcellular location is the cell membrane. The catalysed reaction is L-tyrosyl-[protein] + ATP = O-phospho-L-tyrosyl-[protein] + ADP + H(+). Activated by autophosphorylation at Tyr-434, Tyr-438 and Tyr-439 on the kinase activation loop; phosphorylation at all three tyrosine residues is required for optimal kinase activity. Inhibited by MSC1609119A-1, BMS-754807, PQIP, benzimidazole pyridinone, isoquinolinedione, bis-azaindole, 3-cyanoquinoline, 2,4-bis-arylamino-1,3-pyrimidine, pyrrolopyrimidine, pyrrole-5-carboxaldehyde, picropodophyllin (PPP), tyrphostin derivatives. While most inhibitors bind to the ATP binding pocket, MSC1609119A-1 functions as allosteric inhibitor and binds close to the DFG motif and the activation loop. Its function is as follows. Receptor tyrosine kinase which mediates actions of insulin-like growth factor 1 (IGF1). Binds IGF1 with high affinity and IGF2 and insulin (INS) with a lower affinity. The activated IGF1R is involved in cell growth and survival control. IGF1R is crucial for tumor transformation and survival of malignant cell. Ligand binding activates the receptor kinase, leading to receptor autophosphorylation, and tyrosines phosphorylation of multiple substrates, that function as signaling adapter proteins including, the insulin-receptor substrates (IRS1/2), Shc and 14-3-3 proteins. Phosphorylation of IRSs proteins lead to the activation of two main signaling pathways: the PI3K-AKT/PKB pathway and the Ras-MAPK pathway. The result of activating the MAPK pathway is increased cellular proliferation, whereas activating the PI3K pathway inhibits apoptosis and stimulates protein synthesis. Phosphorylated IRS1 can activate the 85 kDa regulatory subunit of PI3K (PIK3R1), leading to activation of several downstream substrates, including protein AKT/PKB. AKT phosphorylation, in turn, enhances protein synthesis through mTOR activation and triggers the antiapoptotic effects of IGFIR through phosphorylation and inactivation of BAD. In parallel to PI3K-driven signaling, recruitment of Grb2/SOS by phosphorylated IRS1 or Shc leads to recruitment of Ras and activation of the ras-MAPK pathway. In addition to these two main signaling pathways IGF1R signals also through the Janus kinase/signal transducer and activator of transcription pathway (JAK/STAT). Phosphorylation of JAK proteins can lead to phosphorylation/activation of signal transducers and activators of transcription (STAT) proteins. In particular activation of STAT3, may be essential for the transforming activity of IGF1R. The JAK/STAT pathway activates gene transcription and may be responsible for the transforming activity. JNK kinases can also be activated by the IGF1R. IGF1 exerts inhibiting activities on JNK activation via phosphorylation and inhibition of MAP3K5/ASK1, which is able to directly associate with the IGF1R. When present in a hybrid receptor with INSR, binds IGF1. The sequence is that of Insulin-like growth factor 1 receptor (IGF1R) from Bos taurus (Bovine).